Here is a 293-residue protein sequence, read N- to C-terminus: Ribosomal protein L11 methyltransferase (293 aa).

S-adenosyl-L-methionine is bound by residues Thr-144, Gly-165, Asp-187, and Asn-228.

This sequence belongs to the methyltransferase superfamily. PrmA family.

Its subcellular location is the cytoplasm. The enzyme catalyses L-lysyl-[protein] + 3 S-adenosyl-L-methionine = N(6),N(6),N(6)-trimethyl-L-lysyl-[protein] + 3 S-adenosyl-L-homocysteine + 3 H(+). Methylates ribosomal protein L11. The sequence is that of Ribosomal protein L11 methyltransferase from Methylococcus capsulatus (strain ATCC 33009 / NCIMB 11132 / Bath).